The sequence spans 268 residues: Shikimate dehydrogenase (NADP(+)) (268 aa).

Thr62 contributes to the shikimate binding site. Lys66 serves as the catalytic Proton acceptor. Residue Glu78 participates in NADP(+) binding. Asn87 and Asp102 together coordinate shikimate. Residues Gly126–Ile130 and Leu207 each bind NADP(+). Tyr209 provides a ligand contact to shikimate. Position 230 (Gly230) interacts with NADP(+).

It belongs to the shikimate dehydrogenase family. As to quaternary structure, homodimer.

It catalyses the reaction shikimate + NADP(+) = 3-dehydroshikimate + NADPH + H(+). It participates in metabolic intermediate biosynthesis; chorismate biosynthesis; chorismate from D-erythrose 4-phosphate and phosphoenolpyruvate: step 4/7. Its function is as follows. Involved in the biosynthesis of the chorismate, which leads to the biosynthesis of aromatic amino acids. Catalyzes the reversible NADPH linked reduction of 3-dehydroshikimate (DHSA) to yield shikimate (SA). The protein is Shikimate dehydrogenase (NADP(+)) of Thermoplasma acidophilum (strain ATCC 25905 / DSM 1728 / JCM 9062 / NBRC 15155 / AMRC-C165).